We begin with the raw amino-acid sequence, 498 residues long: Probable cytosol aminopeptidase (498 aa).

Mn(2+) is bound by residues lysine 267 and aspartate 272. Lysine 279 is a catalytic residue. The Mn(2+) site is built by aspartate 290, aspartate 349, and glutamate 351. Arginine 353 is a catalytic residue.

It belongs to the peptidase M17 family. The cofactor is Mn(2+).

The protein resides in the cytoplasm. The enzyme catalyses Release of an N-terminal amino acid, Xaa-|-Yaa-, in which Xaa is preferably Leu, but may be other amino acids including Pro although not Arg or Lys, and Yaa may be Pro. Amino acid amides and methyl esters are also readily hydrolyzed, but rates on arylamides are exceedingly low.. The catalysed reaction is Release of an N-terminal amino acid, preferentially leucine, but not glutamic or aspartic acids.. Its function is as follows. Presumably involved in the processing and regular turnover of intracellular proteins. Catalyzes the removal of unsubstituted N-terminal amino acids from various peptides. In Dechloromonas aromatica (strain RCB), this protein is Probable cytosol aminopeptidase.